A 489-amino-acid chain; its full sequence is Tandem C2 domains nuclear protein (489 aa).

Serine 82, serine 155, serine 167, serine 173, and serine 210 each carry phosphoserine. The interval 189–214 is disordered; that stretch reads DSFSSVPSSSSSRKNSQGSNRSLDTI. The span at 191–210 shows a compositional bias: low complexity; that stretch reads FSSVPSSSSSRKNSQGSNRS. Residues threonine 213 and threonine 215 each carry the phosphothreonine modification. Phosphoserine is present on serine 217. C2 domains follow at residues 222 to 341 and 343 to 470; these read DLGR…SLEI and APSK…NQWK. The Nuclear localization signal signature appears at 446–448; it reads RRK.

Its subcellular location is the nucleus. The sequence is that of Tandem C2 domains nuclear protein (Tc2n) from Mus musculus (Mouse).